A 485-amino-acid polypeptide reads, in one-letter code: Hexokinase-1 (485 aa).

Positions 21 to 468 (KELMDEIHQL…SGAGAAVIAA (448 aa)) constitute a Hexokinase domain. The hexokinase small subdomain stretch occupies residues 75–209 (TGKESGNYLA…ELPIEIVALI (135 aa)). Residues 86-91 (DLGGTN) and Lys-111 contribute to the ATP site. Substrate is bound by residues Ser-158, 175–176 (TK), 210–211 (ND), and Asn-237. Residues 210 to 457 (NDTVGTLIAS…DPITIVPAED (248 aa)) are hexokinase large subdomain. Ser-245 bears the Phosphoserine mark. A substrate-binding site is contributed by Glu-269. Ser-272 carries the post-translational modification Phosphoserine. Glu-302 contacts substrate. Residues 307–308 (GY), 344–348 (TSYPA), and 419–423 (SVYNK) each bind ATP.

The protein belongs to the hexokinase family. Homodimer.

The enzyme catalyses a D-hexose + ATP = a D-hexose 6-phosphate + ADP + H(+). The catalysed reaction is D-fructose + ATP = D-fructose 6-phosphate + ADP + H(+). It carries out the reaction D-glucose + ATP = D-glucose 6-phosphate + ADP + H(+). The protein operates within carbohydrate metabolism; hexose metabolism. Its pathway is carbohydrate degradation; glycolysis; D-glyceraldehyde 3-phosphate and glycerone phosphate from D-glucose: step 1/4. With respect to regulation, subject to allosteric control. Substrate inhibition by ATP. Catalyzes the phosphorylation of hexose, such as D-glucose and D-fructose, to hexose 6-phosphate (D-glucose 6-phosphate and D-fructose 6-phosphate, respectively). Mediates the initial step of glycolysis by catalyzing phosphorylation of D-glucose to D-glucose 6-phosphate. This Saccharomyces cerevisiae (strain ATCC 204508 / S288c) (Baker's yeast) protein is Hexokinase-1 (HXK1).